Consider the following 200-residue polypeptide: Dephospho-CoA kinase (200 aa).

Positions 3 to 200 (KVGLTGGIGS…EELQRRLHSR (198 aa)) constitute a DPCK domain. 11-16 (GSGKSS) is a binding site for ATP.

This sequence belongs to the CoaE family.

It is found in the cytoplasm. The catalysed reaction is 3'-dephospho-CoA + ATP = ADP + CoA + H(+). The protein operates within cofactor biosynthesis; coenzyme A biosynthesis; CoA from (R)-pantothenate: step 5/5. Functionally, catalyzes the phosphorylation of the 3'-hydroxyl group of dephosphocoenzyme A to form coenzyme A. The polypeptide is Dephospho-CoA kinase (Thermobifida fusca (strain YX)).